Consider the following 153-residue polypeptide: Pheromone-binding protein Gp-9 (153 aa).

Residues 1 to 19 (MKTFVLHIFIFALVAFASA) form the signal peptide. 3 disulfide bridges follow: Cys-37–Cys-77, Cys-73–Cys-129, and Cys-118–Cys-138.

The protein belongs to the PBP/GOBP family. As to quaternary structure, homodimer.

The protein resides in the secreted. Colony queen number, a major feature of social organization, is associated with worker genotype for Gp-9. Colonies are headed by either a single reproductive queen (monogyne form) or multiple queens (polygyne form). Differences in worker Gp-9 genotypes between social forms may cause differences in workers' abilities to recognize queens and regulate their numbers. In Solenopsis electra (Fire ant), this protein is Pheromone-binding protein Gp-9.